We begin with the raw amino-acid sequence, 473 residues long: Cardiolipin synthase C (473 aa).

2 consecutive PLD phosphodiesterase domains span residues 125-152 and 364-391; these read LNRR…GDAY and SGAS…DPRS. Residues His130, Lys132, Asp137, His369, Lys371, and Asp376 contribute to the active site.

Belongs to the phospholipase D family. Cardiolipin synthase subfamily. ClsC sub-subfamily.

It carries out the reaction a 1,2-diacyl-sn-glycero-3-phospho-(1'-sn-glycerol) + a 1,2-diacyl-sn-glycero-3-phosphoethanolamine = a cardiolipin + ethanolamine. Full activity requires coexpression with the neighboring gene ymdB. In terms of biological role, catalyzes the synthesis of cardiolipin (CL) (diphosphatidylglycerol) from phosphatidylglycerol (PG) and phosphatidylethanolamine (PE). The sequence is that of Cardiolipin synthase C from Escherichia coli (strain K12).